The primary structure comprises 123 residues: Small ribosomal subunit protein uS12cz/uS12cy (123 aa).

Belongs to the universal ribosomal protein uS12 family. As to quaternary structure, part of the 30S ribosomal subunit.

The protein localises to the plastid. The protein resides in the chloroplast. Its function is as follows. With S4 and S5 plays an important role in translational accuracy. Located at the interface of the 30S and 50S subunits. In Nandina domestica (Heavenly bamboo), this protein is Small ribosomal subunit protein uS12cz/uS12cy (rps12-A).